The primary structure comprises 345 residues: Transcription factor 19 (345 aa).

Positions 31 to 88 (YRLGHRADLCDVALRPQQEPGLISGIHAELHAEPRGDDWRVSLEDHSSQGTLVNNVRL) constitute an FHA domain. Ser78 bears the Phosphoserine mark. The interval 190-227 (LTFSPSWGGPKSLPVPAPPGEMGTTPSAPPQRNRRKSV) is disordered. A PHD-type zinc finger spans residues 293–342 (AAPCCCLPQEETVAWVQCDGCDVWFHVACVGCSIQAAREADFRCPGCRAG). Positions 296, 298, 310, 313, 318, 321, 336, and 339 each coordinate Zn(2+).

The protein resides in the nucleus. Functionally, potential transcription factor that may play a role in the regulation of genes involved in cell cycle G1/S transition. May bind to regulatory elements of genes, including the promoter of the transcription factor FOXO1. In Homo sapiens (Human), this protein is Transcription factor 19 (TCF19).